Reading from the N-terminus, the 25-residue chain is Caerin-1.10 (25 aa).

L25 is subject to Leucine amide.

Belongs to the frog skin active peptide (FSAP) family. Caerin subfamily. In terms of tissue distribution, expressed by the skin dorsal glands.

It localises to the secreted. In terms of biological role, antibacterial peptide with wide spectrum of activity. In Litoria rothii (Roth's tree frog), this protein is Caerin-1.10.